The chain runs to 110 residues: Large ribosomal subunit protein uL22 (110 aa).

It belongs to the universal ribosomal protein uL22 family. Part of the 50S ribosomal subunit.

In terms of biological role, this protein binds specifically to 23S rRNA; its binding is stimulated by other ribosomal proteins, e.g. L4, L17, and L20. It is important during the early stages of 50S assembly. It makes multiple contacts with different domains of the 23S rRNA in the assembled 50S subunit and ribosome. The globular domain of the protein is located near the polypeptide exit tunnel on the outside of the subunit, while an extended beta-hairpin is found that lines the wall of the exit tunnel in the center of the 70S ribosome. This Vibrio campbellii (strain ATCC BAA-1116) protein is Large ribosomal subunit protein uL22.